The sequence spans 252 residues: ATP synthase subunit a, chloroplastic (252 aa).

The next 5 helical transmembrane spans lie at 41–61 (GQVL…TLLA), 100–120 (VPFL…GALL), 138–158 (DINT…YAGI), 204–224 (LIVG…LMLL), and 225–245 (GVFT…AYIG).

It belongs to the ATPase A chain family. In terms of assembly, F-type ATPases have 2 components, CF(1) - the catalytic core - and CF(0) - the membrane proton channel. CF(1) has five subunits: alpha(3), beta(3), gamma(1), delta(1), epsilon(1). CF(0) has four main subunits: a, b, b' and c.

Its subcellular location is the plastid. The protein localises to the chloroplast thylakoid membrane. Its function is as follows. Key component of the proton channel; it plays a direct role in the translocation of protons across the membrane. The chain is ATP synthase subunit a, chloroplastic from Oedogonium cardiacum (Filamentous green alga).